The following is a 463-amino-acid chain: MTTETRSLYSQLPAIDRLLRDSSFLSLRDTYGHTRVVELLRQMLDEAREVIRGSQTLPAWCENWAQEVDARLTKEAQSALRPVINLTGTVLHTNLGRALQAEAAVEAVAQAMRSPVTLEYDLDDAGRGHRDRALAQLLCRITGAEDACIVNNNAAAVLLMLAATASGKEVVVSRGELVEIGGAFRIPDVMRQAGCTLHEVGTTNRTHANDYRQAVNENTALLMKVHTSNYSIQGFTKAIDEAELVALGKELDVPVVTDLGSGSLVDLSQYGLPKEPMPQELIAAGVSLVSFSGDKLLGGPQAGIIVGKKEMIARLQSHPLKRALRADKMTLAALEATLRLYLHPEALSEKLPTLRLLTRSAEVIQIQAQRLQAPLVAHYGAEFAVQVMPCLSQIGSGSLPVDRLPSAALTFTPHDGRGSHLESLAARWRELPVPVIGRIYDGRLWLDLRCLEDEQRFLEMLLK.

Lys-295 is modified (N6-(pyridoxal phosphate)lysine).

Belongs to the SelA family. As to quaternary structure, homodecamer; pentamer of dimers. Binds only one seryl-tRNA(Sec) per dimer. The cofactor is pyridoxal 5'-phosphate.

It is found in the cytoplasm. The catalysed reaction is L-seryl-tRNA(Sec) + selenophosphate + H(+) = L-selenocysteinyl-tRNA(Sec) + phosphate. It participates in aminoacyl-tRNA biosynthesis; selenocysteinyl-tRNA(Sec) biosynthesis; selenocysteinyl-tRNA(Sec) from L-seryl-tRNA(Sec) (bacterial route): step 1/1. In terms of biological role, converts seryl-tRNA(Sec) to selenocysteinyl-tRNA(Sec) required for selenoprotein biosynthesis. This Shigella flexneri protein is L-seryl-tRNA(Sec) selenium transferase.